A 440-amino-acid chain; its full sequence is Glycerol-3-phosphate dehydrogenase [NAD(+)] 2, mitochondrial (440 aa).

A mitochondrion-targeting transit peptide spans 1–16 (MLAVRRLTRYTFLKRT). Phosphoserine is present on residues S70, S72, and S75. Residues 90–95 (GSGNWG), F122, and F178 contribute to the NAD(+) site. Residue K201 coordinates substrate. NAD(+) is bound at residue A234. The Proton acceptor role is filled by K294. R359 and Q388 together coordinate NAD(+). 359 to 360 (RN) lines the substrate pocket.

This sequence belongs to the NAD-dependent glycerol-3-phosphate dehydrogenase family.

The protein resides in the cytoplasm. It localises to the mitochondrion. It carries out the reaction sn-glycerol 3-phosphate + NAD(+) = dihydroxyacetone phosphate + NADH + H(+). Functionally, catalyzes the production of glycerol under anaerobic growth conditions. Glycerol production serves as a redox sink by consuming the excess cytosolic NADH during anaerobic metabolism. This Saccharomyces cerevisiae (strain ATCC 204508 / S288c) (Baker's yeast) protein is Glycerol-3-phosphate dehydrogenase [NAD(+)] 2, mitochondrial.